The following is a 454-amino-acid chain: Tubulin alpha-A chain (454 aa).

Residues Gln-12, Asp-72, Ser-141, Gly-145, Thr-146, Thr-180, Asn-207, and Asn-229 each contribute to the GTP site. A Mg(2+)-binding site is contributed by Asp-72. Residue Glu-255 is part of the active site.

This sequence belongs to the tubulin family. Dimer of alpha and beta chains. A typical microtubule is a hollow water-filled tube with an outer diameter of 25 nm and an inner diameter of 15 nM. Alpha-beta heterodimers associate head-to-tail to form protofilaments running lengthwise along the microtubule wall with the beta-tubulin subunit facing the microtubule plus end conferring a structural polarity. Microtubules usually have 13 protofilaments but different protofilament numbers can be found in some organisms and specialized cells. Mg(2+) serves as cofactor.

The protein resides in the cytoplasm. It localises to the cytoskeleton. It catalyses the reaction GTP + H2O = GDP + phosphate + H(+). Functionally, tubulin is the major constituent of microtubules, a cylinder consisting of laterally associated linear protofilaments composed of alpha- and beta-tubulin heterodimers. Microtubules grow by the addition of GTP-tubulin dimers to the microtubule end, where a stabilizing cap forms. Below the cap, tubulin dimers are in GDP-bound state, owing to GTPase activity of alpha-tubulin. The sequence is that of Tubulin alpha-A chain (tba-1) from Neurospora crassa (strain ATCC 24698 / 74-OR23-1A / CBS 708.71 / DSM 1257 / FGSC 987).